The following is a 217-amino-acid chain: Phosphoribosylformylglycinamidine synthase subunit PurQ (217 aa).

The region spanning Asn-2 to Ser-217 is the Glutamine amidotransferase type-1 domain. The active-site Nucleophile is the Cys-86. Active-site residues include His-194 and Glu-196.

Part of the FGAM synthase complex composed of 1 PurL, 1 PurQ and 2 PurS subunits.

It is found in the cytoplasm. The catalysed reaction is N(2)-formyl-N(1)-(5-phospho-beta-D-ribosyl)glycinamide + L-glutamine + ATP + H2O = 2-formamido-N(1)-(5-O-phospho-beta-D-ribosyl)acetamidine + L-glutamate + ADP + phosphate + H(+). The enzyme catalyses L-glutamine + H2O = L-glutamate + NH4(+). It functions in the pathway purine metabolism; IMP biosynthesis via de novo pathway; 5-amino-1-(5-phospho-D-ribosyl)imidazole from N(2)-formyl-N(1)-(5-phospho-D-ribosyl)glycinamide: step 1/2. Its function is as follows. Part of the phosphoribosylformylglycinamidine synthase complex involved in the purines biosynthetic pathway. Catalyzes the ATP-dependent conversion of formylglycinamide ribonucleotide (FGAR) and glutamine to yield formylglycinamidine ribonucleotide (FGAM) and glutamate. The FGAM synthase complex is composed of three subunits. PurQ produces an ammonia molecule by converting glutamine to glutamate. PurL transfers the ammonia molecule to FGAR to form FGAM in an ATP-dependent manner. PurS interacts with PurQ and PurL and is thought to assist in the transfer of the ammonia molecule from PurQ to PurL. The protein is Phosphoribosylformylglycinamidine synthase subunit PurQ of Prochlorococcus marinus (strain NATL2A).